Here is an 878-residue protein sequence, read N- to C-terminus: Alanine--tRNA ligase (878 aa).

Positions 568, 572, 670, and 674 each coordinate Zn(2+).

The protein belongs to the class-II aminoacyl-tRNA synthetase family. Zn(2+) serves as cofactor.

Its subcellular location is the cytoplasm. The catalysed reaction is tRNA(Ala) + L-alanine + ATP = L-alanyl-tRNA(Ala) + AMP + diphosphate. Functionally, catalyzes the attachment of alanine to tRNA(Ala) in a two-step reaction: alanine is first activated by ATP to form Ala-AMP and then transferred to the acceptor end of tRNA(Ala). Also edits incorrectly charged Ser-tRNA(Ala) and Gly-tRNA(Ala) via its editing domain. This is Alanine--tRNA ligase from Latilactobacillus sakei subsp. sakei (strain 23K) (Lactobacillus sakei subsp. sakei).